The sequence spans 69 residues: uncharacterized protein (69 aa).

This is an uncharacterized protein from Escherichia coli O157:H7.